Here is a 151-residue protein sequence, read N- to C-terminus: UPF0756 membrane protein GK2737 (151 aa).

The next 4 membrane-spanning stretches (helical) occupy residues 5-25, 53-73, 79-99, and 121-141; these read VLFL…SLIV, WGVT…EIGF, SLQS…ALIA, and ILAV…AGIA.

Belongs to the UPF0756 family.

It localises to the cell membrane. The chain is UPF0756 membrane protein GK2737 from Geobacillus kaustophilus (strain HTA426).